Consider the following 135-residue polypeptide: Gene 52 protein (135 aa).

2 disordered regions span residues 1–20 (MASG…PTPE) and 110–135 (LGGR…AEKQ). The span at 122–135 (SKPRGRSKHRAEKQ) shows a compositional bias: basic residues.

It belongs to the herpesviridae BLRF2 family.

This chain is Gene 52 protein (52), found in Equine herpesvirus 2 (strain 86/87) (EHV-2).